We begin with the raw amino-acid sequence, 20 residues long: Brevinin-1LT (20 aa).

Cys-14 and Cys-20 are disulfide-bonded.

Expressed by the skin glands.

The protein localises to the secreted. Its function is as follows. Antimicrobial peptide. In Rana latastei (Italian agile frog), this protein is Brevinin-1LT.